The following is a 307-amino-acid chain: UDP-3-O-acyl-N-acetylglucosamine deacetylase (307 aa).

The Zn(2+) site is built by His-78, His-241, and Asp-245. The active-site Proton donor is the His-268.

Belongs to the LpxC family. The cofactor is Zn(2+).

It catalyses the reaction a UDP-3-O-[(3R)-3-hydroxyacyl]-N-acetyl-alpha-D-glucosamine + H2O = a UDP-3-O-[(3R)-3-hydroxyacyl]-alpha-D-glucosamine + acetate. It functions in the pathway glycolipid biosynthesis; lipid IV(A) biosynthesis; lipid IV(A) from (3R)-3-hydroxytetradecanoyl-[acyl-carrier-protein] and UDP-N-acetyl-alpha-D-glucosamine: step 2/6. In terms of biological role, catalyzes the hydrolysis of UDP-3-O-myristoyl-N-acetylglucosamine to form UDP-3-O-myristoylglucosamine and acetate, the committed step in lipid A biosynthesis. In Acidovorax ebreus (strain TPSY) (Diaphorobacter sp. (strain TPSY)), this protein is UDP-3-O-acyl-N-acetylglucosamine deacetylase.